Consider the following 338-residue polypeptide: Protein pelota homolog (338 aa).

Belongs to the eukaryotic release factor 1 family. Pelota subfamily. As to quaternary structure, monomer. A divalent metal cation is required as a cofactor.

The protein localises to the cytoplasm. In terms of biological role, may function in recognizing stalled ribosomes, interact with stem-loop structures in stalled mRNA molecules, and effect endonucleolytic cleavage of the mRNA. May play a role in the release non-functional ribosomes and degradation of damaged mRNAs. Has endoribonuclease activity. This Caldivirga maquilingensis (strain ATCC 700844 / DSM 13496 / JCM 10307 / IC-167) protein is Protein pelota homolog.